The following is a 346-amino-acid chain: MIELKNVSKVFTTKKVNVEALKSTSLQVKKGEVFGIIGYSGAGKSTLIRCVNLLEKPTTGNIIVNNQDLTTLSAKELAKARQKIGMIFQGFNLLKTVTVYENIALPLRLAGIPKTEIEKRVEKYLRIVDLFNRKDAYPSELSGGQKQRVAIARALSHEPEVLLSDEATSALDPETTDSILDLLLKINEEIGITILLITHEMNVIQRICDRVAVMEHGAVIESGTVKEIFTNPQHVTTKKFVNSAFAAKIPAEVQKELQRTGEIVTLSFIGNSSGEPALAIATKRFQVYPNILSGNITQLKHEAYGKLVIHMQGEQNEINHALSFLQEQGIIVEGGRTDYGKQVLFG.

The region spanning 2–241 (IELKNVSKVF…PQHVTTKKFV (240 aa)) is the ABC transporter domain. Residue 38–45 (GYSGAGKS) coordinates ATP.

This sequence belongs to the ABC transporter superfamily. Methionine importer (TC 3.A.1.24) family. The complex is composed of two ATP-binding proteins (MetN), two transmembrane proteins (MetI) and a solute-binding protein (MetQ).

It is found in the cell membrane. The enzyme catalyses L-methionine(out) + ATP + H2O = L-methionine(in) + ADP + phosphate + H(+). It carries out the reaction D-methionine(out) + ATP + H2O = D-methionine(in) + ADP + phosphate + H(+). In terms of biological role, part of the ABC transporter complex MetNIQ involved in methionine import. Responsible for energy coupling to the transport system. The polypeptide is Methionine import ATP-binding protein MetN 1 (Bacillus cereus (strain ATCC 14579 / DSM 31 / CCUG 7414 / JCM 2152 / NBRC 15305 / NCIMB 9373 / NCTC 2599 / NRRL B-3711)).